The chain runs to 178 residues: uncharacterized protein (178 aa).

This is an uncharacterized protein from Saccharolobus islandicus (Sulfolobus islandicus).